The chain runs to 288 residues: Nucleotide-binding protein Neut_1559 (288 aa).

8 to 15 provides a ligand contact to ATP; that stretch reads GLSGSGKS. A GTP-binding site is contributed by 57 to 60; the sequence is DMRS.

Belongs to the RapZ-like family.

Displays ATPase and GTPase activities. The protein is Nucleotide-binding protein Neut_1559 of Nitrosomonas eutropha (strain DSM 101675 / C91 / Nm57).